The sequence spans 273 residues: Proteasome subunit beta type-10 (273 aa).

Met1 carries the post-translational modification N-acetylmethionine. Positions 1–39 are cleaved as a propeptide — removed in mature form; it reads MLKQAVEHRGGFSFENCQRNASLEHVLPGLRVPLARKTG. Residue Thr40 is the Nucleophile of the active site. Ser230 is modified (phosphoserine).

The protein belongs to the peptidase T1B family. The 26S proteasome consists of a 20S proteasome core and two 19S regulatory subunits. The 20S proteasome core is composed of 28 subunits that are arranged in four stacked rings, resulting in a barrel-shaped structure. The two end rings are each formed by seven alpha subunits, and the two central rings are each formed by seven beta subunits. The catalytic chamber with the active sites is on the inside of the barrel. Component of the immunoproteasome, where it displaces the equivalent housekeeping subunit PSMB7. Component of the spermatoproteasome, a form of the proteasome specifically found in testis. In terms of processing, autocleaved. The resulting N-terminal Thr residue of the mature subunit is responsible for the nucleophile proteolytic activity.

It localises to the cytoplasm. The protein resides in the nucleus. The catalysed reaction is Cleavage of peptide bonds with very broad specificity.. Functionally, the proteasome is a multicatalytic proteinase complex which is characterized by its ability to cleave peptides with Arg, Phe, Tyr, Leu, and Glu adjacent to the leaving group at neutral or slightly basic pH. The proteasome has an ATP-dependent proteolytic activity. This subunit is involved in antigen processing to generate class I binding peptides. This is Proteasome subunit beta type-10 (Psmb10) from Rattus norvegicus (Rat).